We begin with the raw amino-acid sequence, 280 residues long: Protease HtpX (280 aa).

The next 2 membrane-spanning stretches (helical) occupy residues 7–26 (TFILLASLTALLVVIGGLLG) and 30–49 (GMLVALLFAGIMNFSAYWYS). Histidine 129 contributes to the Zn(2+) binding site. Residue glutamate 130 is part of the active site. Residue histidine 133 participates in Zn(2+) binding. Transmembrane regions (helical) follow at residues 146 to 166 (ATIAGAISGIANMFMWLSMFG) and 178 to 198 (VVGMIMMIVAPLAAGLIQMAI). Glutamate 203 is a binding site for Zn(2+).

The protein belongs to the peptidase M48B family. Requires Zn(2+) as cofactor.

The protein localises to the cell inner membrane. The sequence is that of Protease HtpX from Legionella pneumophila (strain Corby).